Reading from the N-terminus, the 451-residue chain is Potassium/sodium uptake protein NtpJ (451 aa).

The next 11 membrane-spanning stretches (helical) occupy residues 18 to 38 (IAAG…LPFF), 46 to 66 (HFID…LTTL), 78 to 98 (FLIM…PILF), 133 to 153 (ILKF…VVFI), 162 to 182 (IWFS…DLLG), 192 to 212 (VYLI…FIVW), 230 to 250 (VALS…LITE), 293 to 313 (LILT…AGGL), 350 to 370 (ALTL…VLSV), 380 to 400 (IEYI…TMGL), and 410 to 430 (LVII…VFSL).

It belongs to the TrkH potassium transport family.

The protein localises to the cell membrane. Mediates electrogenic transport of potassium as well as sodium. Acts probably as a potassium-sodium cotransporter. Major sodium reentry pathway at high pH values. This Enterococcus hirae (strain ATCC 9790 / DSM 20160 / JCM 8729 / LMG 6399 / NBRC 3181 / NCIMB 6459 / NCDO 1258 / NCTC 12367 / WDCM 00089 / R) protein is Potassium/sodium uptake protein NtpJ (ntpJ).